Here is a 393-residue protein sequence, read N- to C-terminus: S-adenosylmethionine synthase (393 aa).

Glu-9 provides a ligand contact to Mg(2+). ATP is bound at residue His-15. Glu-43 is a K(+) binding site. Positions 56 and 99 each coordinate L-methionine. ATP-binding positions include 167-169 (DGK), 235-238 (SGRF), Asp-246, 252-253 (RK), Ala-269, Lys-273, and Lys-277. Asp-246 serves as a coordination point for L-methionine. Lys-277 serves as a coordination point for L-methionine.

The protein belongs to the AdoMet synthase family. Homotetramer. Mn(2+) is required as a cofactor. The cofactor is Mg(2+). It depends on Co(2+) as a cofactor. K(+) serves as cofactor.

It localises to the cytoplasm. The catalysed reaction is L-methionine + ATP + H2O = S-adenosyl-L-methionine + phosphate + diphosphate. Its pathway is amino-acid biosynthesis; S-adenosyl-L-methionine biosynthesis; S-adenosyl-L-methionine from L-methionine: step 1/1. Functionally, catalyzes the formation of S-adenosylmethionine from methionine and ATP. The reaction comprises two steps that are both catalyzed by the same enzyme: formation of S-adenosylmethionine (AdoMet) and triphosphate, and subsequent hydrolysis of the triphosphate. This Brassica rapa subsp. pekinensis (Chinese cabbage) protein is S-adenosylmethionine synthase (SAMS).